The following is a 294-amino-acid chain: 4-hydroxy-tetrahydrodipicolinate synthase (294 aa).

T44 contacts pyruvate. Y132 functions as the Proton donor/acceptor in the catalytic mechanism. The active-site Schiff-base intermediate with substrate is the K160. V202 serves as a coordination point for pyruvate.

This sequence belongs to the DapA family. Homotetramer; dimer of dimers.

It localises to the cytoplasm. It carries out the reaction L-aspartate 4-semialdehyde + pyruvate = (2S,4S)-4-hydroxy-2,3,4,5-tetrahydrodipicolinate + H2O + H(+). It functions in the pathway amino-acid biosynthesis; L-lysine biosynthesis via DAP pathway; (S)-tetrahydrodipicolinate from L-aspartate: step 3/4. Functionally, catalyzes the condensation of (S)-aspartate-beta-semialdehyde [(S)-ASA] and pyruvate to 4-hydroxy-tetrahydrodipicolinate (HTPA). The sequence is that of 4-hydroxy-tetrahydrodipicolinate synthase from Leptospira biflexa serovar Patoc (strain Patoc 1 / Ames).